A 218-amino-acid chain; its full sequence is Capsid protein (218 aa).

Met-1 is modified (N-acetylmethionine; by host). Residues Met-1 to Ala-28 are disordered. The span at Arg-11 to Ser-21 shows a compositional bias: basic residues.

The protein belongs to the cucumovirus capsid protein family.

The protein resides in the virion. Its function is as follows. Capsid protein. Probably binds RNA and plays a role in packaging. The sequence is that of Capsid protein from Cucumis sativus (Cucumber).